The chain runs to 192 residues: Imidazole glycerol phosphate synthase subunit HisH (192 aa).

The region spanning 1 to 192 (MIAIIDYGLG…QALKGGFIND (192 aa)) is the Glutamine amidotransferase type-1 domain. C77 (nucleophile) is an active-site residue. Catalysis depends on residues H169 and E171.

As to quaternary structure, heterodimer of HisH and HisF.

The protein resides in the cytoplasm. The enzyme catalyses 5-[(5-phospho-1-deoxy-D-ribulos-1-ylimino)methylamino]-1-(5-phospho-beta-D-ribosyl)imidazole-4-carboxamide + L-glutamine = D-erythro-1-(imidazol-4-yl)glycerol 3-phosphate + 5-amino-1-(5-phospho-beta-D-ribosyl)imidazole-4-carboxamide + L-glutamate + H(+). It catalyses the reaction L-glutamine + H2O = L-glutamate + NH4(+). Its pathway is amino-acid biosynthesis; L-histidine biosynthesis; L-histidine from 5-phospho-alpha-D-ribose 1-diphosphate: step 5/9. IGPS catalyzes the conversion of PRFAR and glutamine to IGP, AICAR and glutamate. The HisH subunit catalyzes the hydrolysis of glutamine to glutamate and ammonia as part of the synthesis of IGP and AICAR. The resulting ammonia molecule is channeled to the active site of HisF. The protein is Imidazole glycerol phosphate synthase subunit HisH of Staphylococcus epidermidis (strain ATCC 12228 / FDA PCI 1200).